The chain runs to 366 residues: Anhydro-N-acetylmuramic acid kinase (366 aa).

Residue 10–17 (GTSMDGID) coordinates ATP.

This sequence belongs to the anhydro-N-acetylmuramic acid kinase family.

It catalyses the reaction 1,6-anhydro-N-acetyl-beta-muramate + ATP + H2O = N-acetyl-D-muramate 6-phosphate + ADP + H(+). Its pathway is amino-sugar metabolism; 1,6-anhydro-N-acetylmuramate degradation. It participates in cell wall biogenesis; peptidoglycan recycling. In terms of biological role, catalyzes the specific phosphorylation of 1,6-anhydro-N-acetylmuramic acid (anhMurNAc) with the simultaneous cleavage of the 1,6-anhydro ring, generating MurNAc-6-P. Is required for the utilization of anhMurNAc either imported from the medium or derived from its own cell wall murein, and thus plays a role in cell wall recycling. This Legionella pneumophila (strain Lens) protein is Anhydro-N-acetylmuramic acid kinase.